A 358-amino-acid chain; its full sequence is Peptide chain release factor 2 (358 aa).

N5-methylglutamine is present on Q242.

This sequence belongs to the prokaryotic/mitochondrial release factor family. In terms of processing, methylated by PrmC. Methylation increases the termination efficiency of RF2.

It localises to the cytoplasm. Its function is as follows. Peptide chain release factor 2 directs the termination of translation in response to the peptide chain termination codons UGA and UAA. The chain is Peptide chain release factor 2 (prfB) from Borreliella burgdorferi (strain ATCC 35210 / DSM 4680 / CIP 102532 / B31) (Borrelia burgdorferi).